Reading from the N-terminus, the 865-residue chain is Ribosome biogenesis protein BOP1 homolog (865 aa).

Disordered regions lie at residues methionine 1 to glycine 195 and lysine 207 to isoleucine 240. 3 stretches are compositionally biased toward acidic residues: residues leucine 30–tyrosine 44, asparagine 57–leucine 79, and aspartate 87–alanine 159. The span at lysine 160–glutamine 180 shows a compositional bias: basic and acidic residues. 7 WD repeats span residues glycine 526–threonine 565, proline 567–valine 607, threonine 651–proline 693, lysine 696–lysine 734, proline 737–glutamine 776, isoleucine 780–glutamine 819, and valine 835–threonine 865.

It belongs to the WD repeat BOP1/ERB1 family.

It localises to the nucleus. The protein resides in the nucleolus. It is found in the nucleoplasm. Its function is as follows. Required for maturation of ribosomal RNAs and formation of the large ribosomal subunit. The sequence is that of Ribosome biogenesis protein BOP1 homolog from Anopheles gambiae (African malaria mosquito).